The sequence spans 902 residues: Translation initiation factor IF-2 (902 aa).

Composition is skewed to basic and acidic residues over residues 1-12 (MVDTKTPGDKKL) and 43-60 (VVEK…EPHA). The disordered stretch occupies residues 1–276 (MVDTKTPGDK…KPGPQKERGR (276 aa)). Pro residues predominate over residues 69–84 (PAAPAPSRPAPPPAPP). Over residues 111–174 (AKLREVEERR…ETEAKKRFGE (64 aa)) the composition is skewed to basic and acidic residues. 2 stretches are compositionally biased toward low complexity: residues 181-190 (AARPATAAPA) and 198-237 (APAA…AVAA). Residues 398 to 567 (TRSPVVTVMG…MIALQADILD (170 aa)) enclose the tr-type G domain. The tract at residues 407-414 (GHVDHGKT) is G1. 407–414 (GHVDHGKT) contacts GTP. The segment at 432 to 436 (GITQH) is G2. A G3 region spans residues 455 to 458 (DTPG). Residues 455–459 (DTPGH) and 509–512 (NKID) contribute to the GTP site. Positions 509–512 (NKID) are G4. The segment at 545-547 (SAK) is G5.

It belongs to the TRAFAC class translation factor GTPase superfamily. Classic translation factor GTPase family. IF-2 subfamily.

The protein resides in the cytoplasm. In terms of biological role, one of the essential components for the initiation of protein synthesis. Protects formylmethionyl-tRNA from spontaneous hydrolysis and promotes its binding to the 30S ribosomal subunits. Also involved in the hydrolysis of GTP during the formation of the 70S ribosomal complex. The chain is Translation initiation factor IF-2 from Bradyrhizobium diazoefficiens (strain JCM 10833 / BCRC 13528 / IAM 13628 / NBRC 14792 / USDA 110).